The following is an 82-amino-acid chain: Putative membrane protein insertion efficiency factor (82 aa).

It belongs to the UPF0161 family.

It localises to the cell inner membrane. In terms of biological role, could be involved in insertion of integral membrane proteins into the membrane. The chain is Putative membrane protein insertion efficiency factor from Colwellia psychrerythraea (strain 34H / ATCC BAA-681) (Vibrio psychroerythus).